Here is a 472-residue protein sequence, read N- to C-terminus: Ribosomal protein uS12 methylthiotransferase RimO (472 aa).

Residues 33-143 (NRIGFVSLGC…VLKHVHKYVP (111 aa)) enclose the MTTase N-terminal domain. Residues cysteine 42, cysteine 78, cysteine 107, cysteine 175, cysteine 179, and cysteine 182 each coordinate [4Fe-4S] cluster. The Radical SAM core domain maps to 161 to 398 (LTPKHYAYLK…MEVQAEISAE (238 aa)). The TRAM domain maps to 401 to 467 (ARFVGRTLDI…EHDLWAEVVD (67 aa)).

This sequence belongs to the methylthiotransferase family. RimO subfamily. [4Fe-4S] cluster is required as a cofactor.

The protein resides in the cytoplasm. The catalysed reaction is L-aspartate(89)-[ribosomal protein uS12]-hydrogen + (sulfur carrier)-SH + AH2 + 2 S-adenosyl-L-methionine = 3-methylsulfanyl-L-aspartate(89)-[ribosomal protein uS12]-hydrogen + (sulfur carrier)-H + 5'-deoxyadenosine + L-methionine + A + S-adenosyl-L-homocysteine + 2 H(+). In terms of biological role, catalyzes the methylthiolation of an aspartic acid residue of ribosomal protein uS12. The chain is Ribosomal protein uS12 methylthiotransferase RimO from Shewanella baltica (strain OS155 / ATCC BAA-1091).